A 165-amino-acid chain; its full sequence is Endoribonuclease YbeY (165 aa).

Positions 130, 134, and 140 each coordinate Zn(2+).

It belongs to the endoribonuclease YbeY family. Zn(2+) serves as cofactor.

Its subcellular location is the cytoplasm. In terms of biological role, single strand-specific metallo-endoribonuclease involved in late-stage 70S ribosome quality control and in maturation of the 3' terminus of the 16S rRNA. The chain is Endoribonuclease YbeY from Streptococcus agalactiae serotype Ia (strain ATCC 27591 / A909 / CDC SS700).